Reading from the N-terminus, the 346-residue chain is Selenocysteine Se-methyltransferase (346 aa).

In terms of domain architecture, Hcy-binding spans 13–330 (SMKELLKETG…TTIRAIHKRL (318 aa)). Zn(2+) is bound by residues cysteine 248, cysteine 315, and cysteine 316.

Zn(2+) is required as a cofactor. In terms of tissue distribution, expressed in roots, young leaves and florets, but not detected in plants not exposed to selenium.

The enzyme catalyses S-methyl-L-methionine + L-selenocysteine = Se-methyl-L-selenocysteine + L-methionine + H(+). Inhibited by L-methionine. Catalyzes the methylation of DL- and L-selenocysteine with S-methylmethionine as donor. Also methylates DL-homocysteine, DL- and L-cysteine in vitro. May be involved in selenium detoxification. The polypeptide is Selenocysteine Se-methyltransferase (SMT) (Brassica oleracea var. italica (Broccoli)).